The following is a 232-amino-acid chain: MHPVDKKSLALKIYEATGYQFRDLDLLLEALTHPSLSYKSAANYERLEFLGDAVLSMTVSEMLYRLFPDDDEGCLTRKRTALVRGSEVVEIARSIGLGELILMSGGERTCGGSDNPGTLENALEALIGAMYMDGGPEAYRSFIHKHWLARAQHMSYTPPQDPKTALQEWVQGRGWAMPLYKLVSKSGPEHKPVFAVEVSIQEHGNVLGTGSSKKLAEQEAAKLMLKKITELP.

Positions 10–135 (ALKIYEATGY…LIGAMYMDGG (126 aa)) constitute an RNase III domain. Residue E48 participates in Mg(2+) binding. D52 is a catalytic residue. Mg(2+)-binding residues include N121 and E124. E124 is an active-site residue. A DRBM domain is found at 161 to 230 (DPKTALQEWV…AKLMLKKITE (70 aa)).

It belongs to the ribonuclease III family. As to quaternary structure, homodimer. Requires Mg(2+) as cofactor.

It is found in the cytoplasm. The catalysed reaction is Endonucleolytic cleavage to 5'-phosphomonoester.. Its function is as follows. Digests double-stranded RNA. Involved in the processing of primary rRNA transcript to yield the immediate precursors to the large and small rRNAs (23S and 16S). Processes some mRNAs, and tRNAs when they are encoded in the rRNA operon. Processes pre-crRNA and tracrRNA of type II CRISPR loci if present in the organism. This chain is Ribonuclease 3, found in Anaplasma marginale (strain Florida).